The sequence spans 298 residues: 4-hydroxy-tetrahydrodipicolinate synthase (298 aa).

T51 is a binding site for pyruvate. Catalysis depends on Y139, which acts as the Proton donor/acceptor. K167 serves as the catalytic Schiff-base intermediate with substrate. Position 209 (I209) interacts with pyruvate.

This sequence belongs to the DapA family. As to quaternary structure, homotetramer; dimer of dimers.

Its subcellular location is the cytoplasm. The catalysed reaction is L-aspartate 4-semialdehyde + pyruvate = (2S,4S)-4-hydroxy-2,3,4,5-tetrahydrodipicolinate + H2O + H(+). The protein operates within amino-acid biosynthesis; L-lysine biosynthesis via DAP pathway; (S)-tetrahydrodipicolinate from L-aspartate: step 3/4. Functionally, catalyzes the condensation of (S)-aspartate-beta-semialdehyde [(S)-ASA] and pyruvate to 4-hydroxy-tetrahydrodipicolinate (HTPA). The chain is 4-hydroxy-tetrahydrodipicolinate synthase from Haemophilus influenzae (strain PittEE).